A 195-amino-acid chain; its full sequence is uncharacterized protein (195 aa).

The signal sequence occupies residues 1–21 (MHFSSCVLVSALAIVTNVATA). N-linked (GlcNAc...) asparagine glycans are attached at residues Asn-62 and Asn-109. Residues 119–141 (DWDEDTVTGENAPDSGEPFSTSH) form a disordered region.

The protein resides in the secreted. This is an uncharacterized protein from Arthroderma benhamiae (strain ATCC MYA-4681 / CBS 112371) (Trichophyton mentagrophytes).